A 145-amino-acid polypeptide reads, in one-letter code: D-aminoacyl-tRNA deacylase (145 aa).

The Gly-cisPro motif, important for rejection of L-amino acids signature appears at 137 to 138; sequence GP.

It belongs to the DTD family. Homodimer.

The protein resides in the cytoplasm. It carries out the reaction glycyl-tRNA(Ala) + H2O = tRNA(Ala) + glycine + H(+). It catalyses the reaction a D-aminoacyl-tRNA + H2O = a tRNA + a D-alpha-amino acid + H(+). In terms of biological role, an aminoacyl-tRNA editing enzyme that deacylates mischarged D-aminoacyl-tRNAs. Also deacylates mischarged glycyl-tRNA(Ala), protecting cells against glycine mischarging by AlaRS. Acts via tRNA-based rather than protein-based catalysis; rejects L-amino acids rather than detecting D-amino acids in the active site. By recycling D-aminoacyl-tRNA to D-amino acids and free tRNA molecules, this enzyme counteracts the toxicity associated with the formation of D-aminoacyl-tRNA entities in vivo and helps enforce protein L-homochirality. This Shewanella putrefaciens (strain CN-32 / ATCC BAA-453) protein is D-aminoacyl-tRNA deacylase.